Here is a 444-residue protein sequence, read N- to C-terminus: Trigger factor (444 aa).

The 86-residue stretch at 161-246 (GDRVVIDFKG…VQKVEGQKLP (86 aa)) folds into the PPIase FKBP-type domain.

This sequence belongs to the FKBP-type PPIase family. Tig subfamily.

The protein localises to the cytoplasm. It catalyses the reaction [protein]-peptidylproline (omega=180) = [protein]-peptidylproline (omega=0). In terms of biological role, involved in protein export. Acts as a chaperone by maintaining the newly synthesized protein in an open conformation. Functions as a peptidyl-prolyl cis-trans isomerase. The polypeptide is Trigger factor (Saccharophagus degradans (strain 2-40 / ATCC 43961 / DSM 17024)).